Reading from the N-terminus, the 284-residue chain is TnP I resolvase (284 aa).

The region spanning 1–84 is the Core-binding (CB) domain; sequence MDVAKQFSSY…SLAKFNEFLI (84 aa). Residues 107-282 enclose the Tyr recombinase domain; the sequence is ASPTQIVELD…NQLQLKNKME (176 aa). Catalysis depends on residues Arg145, Lys170, His234, Arg237, and His260. Catalysis depends on Tyr269, which acts as the O-(3'-phospho-DNA)-tyrosine intermediate.

This sequence belongs to the 'phage' integrase family.

Its function is as follows. Resolvase catalyzes the resolution (a site-specific recombination) of the cointegrated replicon to yield the final transposition products. The polypeptide is TnP I resolvase (tnpI) (Bacillus thuringiensis).